Consider the following 306-residue polypeptide: MAGRHQNRSFPLPGVQSSGQVHAFGNCSDSDILEEDAEVYELRSRGKEKVRRSTSRDRLDDIIVLTKDIQEGDTLNAIALQYCCTVADIKRVNNLISDQDFFALRSIKIPVKKFSSLTETLCPPKGRQTSRHSSVQYSSEQQEILPANDSLAYSDSAGSFLKEVDRDIEQIVKCTDNKRENLNEVVSALTAQQMRFEPDNKNTQRKDPYYGADWGIGWWTAVVIMLIVGIITPVFYLLYYEILAKVDVSHHSTVDSSHLHSKITPPSQQREMENGIVPTKGIHFSQQDDHKLYSQDSQSPAAQQET.

Residues Met-1–Gly-217 lie on the Extracellular side of the membrane. Asn-7 carries N-linked (GlcNAc...) asparagine glycosylation. Ser-55 carries the post-translational modification Phosphoserine. The LysM domain maps to Leu-65–Ile-109. Residues Trp-218 to Leu-238 form a helical membrane-spanning segment. Over Tyr-239–Thr-306 the chain is Cytoplasmic.

The protein resides in the cell membrane. It localises to the golgi apparatus. In terms of biological role, essential for Golgi structural integrity. The protein is LysM and putative peptidoglycan-binding domain-containing protein 3 (LYSMD3) of Homo sapiens (Human).